The following is a 368-amino-acid chain: Galactoside 2-alpha-L-fucosyltransferase SEC1 (368 aa).

The interval 1-20 (MWDMRAVAPQRPAAGHPRAG) is disordered. Residues 1 to 31 (MWDMRAVAPQRPAAGHPRAGWPRKLKTAATR) lie on the Cytoplasmic side of the membrane. Residues 32–52 (FWATCPSSSTVCFLFVIFAVS) form a helical membrane-spanning segment. The Lumenal portion of the chain corresponds to 53–368 (TVFHCHRRLA…NLGQARESHP (316 aa)).

Belongs to the glycosyltransferase 11 family. As to expression, kidney.

The protein localises to the golgi apparatus. Its subcellular location is the golgi stack membrane. The enzyme catalyses a ganglioside GM1 + GDP-beta-L-fucose = a ganglioside Fuc-GM1 + GDP + H(+). Its pathway is protein modification; protein glycosylation. Catalyzes the transfer of alpha 1,2-linked fucose to ganglioside GM1 and galacto-N-biose. This is Galactoside 2-alpha-L-fucosyltransferase SEC1 from Bos taurus (Bovine).